We begin with the raw amino-acid sequence, 1390 residues long: Hepatocyte growth factor receptor (1390 aa).

The first 24 residues, 1-24 (MKAPAVLAPGILVLLFTLVQRSNG), serve as a signal peptide directing secretion. Over 25–932 (ECKEALAKSE…VIVQPDQNFT (908 aa)) the chain is Extracellular. Positions 27–515 (KEALAKSEMN…TGKKITKIPL (489 aa)) constitute a Sema domain. The N-linked (GlcNAc...) asparagine glycan is linked to Asn45. Disulfide bonds link Cys95-Cys101, Cys98-Cys160, Cys133-Cys141, and Cys172-Cys175. N-linked (GlcNAc...) asparagine glycosylation occurs at Asn106. Residue Asn149 is glycosylated (N-linked (GlcNAc...) asparagine). N-linked (GlcNAc...) asparagine glycosylation occurs at Asn202. Intrachain disulfides connect Cys298/Cys363 and Cys385/Cys397. N-linked (GlcNAc...) asparagine glycans are attached at residues Asn399 and Asn405. Cystine bridges form between Cys520–Cys538, Cys526–Cys561, Cys529–Cys545, and Cys541–Cys551. 3 IPT/TIG domains span residues 563-655 (PAIY…FSYV), 657-739 (PVIT…FSYR), and 742-836 (PIVY…LIYV). O-linked (Man) threonine glycosylation is present at Thr582. 2 N-linked (GlcNAc...) asparagine glycosylation sites follow: Asn607 and Asn635. Thr676 and Thr761 each carry an O-linked (Man) threonine glycan. Residues Asn785, Asn879, and Asn930 are each glycosylated (N-linked (GlcNAc...) asparagine). Residues 933–955 (GLIAGVVSISIALLLLLGFFLWL) form a helical membrane-spanning segment. Over 956–1390 (KKRKQIKDLG…TRPASFWETS (435 aa)) the chain is Cytoplasmic. Ser966 is subject to Phosphoserine. Phosphothreonine is present on Thr977. Phosphoserine occurs at positions 990, 997, and 1000. Tyr1003 bears the Phosphotyrosine mark. A Protein kinase domain is found at 1078-1345 (VHFNEVIGRG…RISAIFSTFI (268 aa)). ATP is bound by residues 1084–1092 (IGRGHFGCV) and Lys1110. Asp1204 functions as the Proton acceptor in the catalytic mechanism. The interaction with RANBP9 stretch occupies residues 1212-1390 (LDEKFTVKVA…TRPASFWETS (179 aa)). Tyr1230 bears the Phosphotyrosine mark. Phosphotyrosine; by autocatalysis is present on residues Tyr1234 and Tyr1235. Thr1289 is modified (phosphothreonine). Positions 1320–1359 (WHPKAEMRPSFSELVSRISAIFSTFIGEHYVHVNATYVNV) are interaction with MUC20. Tyr1349 and Tyr1356 each carry phosphotyrosine; by autocatalysis. Residue Tyr1365 is modified to Phosphotyrosine.

The protein belongs to the protein kinase superfamily. Tyr protein kinase family. Heterodimer made of an alpha chain (50 kDa) and a beta chain (145 kDa) which are disulfide linked. Binds PLXNB1. Interacts when phosphorylated with downstream effectors including STAT3, PIK3R1, SRC, PCLG1, GRB2 and GAB1. Interacts with SPSB1, SPSB2 and SPSB4. Interacts with INPP5D/SHIP1. When phosphorylated at Tyr-1356, interacts with INPPL1/SHIP2. Interacts with RANBP9 and RANBP10, as well as SPSB1, SPSB2, SPSB3 and SPSB4. SPSB1 binding occurs in the presence and in the absence of HGF, however HGF treatment has a positive effect on this interaction. Interacts with MUC20; prevents interaction with GRB2 and suppresses hepatocyte growth factor-induced cell proliferation. Interacts with GRB10. Interacts with PTPN1 and PTPN2. Interacts with HSP90AA1 and HSP90AB1; the interaction suppresses MET kinase activity. Interacts with tensin TNS3. Interacts (when phosphorylated) with tensin TNS4 (via SH2 domain); the interaction increases MET protein stability by inhibiting MET endocytosis and subsequent lysosomal degradation. Post-translationally, autophosphorylated in response to ligand binding on Tyr-1234 and Tyr-1235 in the kinase domain leading to further phosphorylation of Tyr-1349 and Tyr-1356 in the C-terminal multifunctional docking site. Dephosphorylated by PTPRJ at Tyr-1349 and Tyr-1365. Dephosphorylated by PTPN1 and PTPN2. Ubiquitinated. Ubiquitination by CBL regulates the receptor stability and activity through proteasomal degradation. In terms of processing, O-mannosylation of IPT/TIG domains by TMEM260 is required for protein maturation. O-mannosylated residues are composed of single mannose glycans that are not elongated or modified.

Its subcellular location is the membrane. The enzyme catalyses L-tyrosyl-[protein] + ATP = O-phospho-L-tyrosyl-[protein] + ADP + H(+). Its activity is regulated as follows. In its inactive state, the C-terminal tail interacts with the catalytic domain and inhibits the kinase activity. Upon ligand binding, the C-terminal tail is displaced and becomes phosphorylated, thus increasing the kinase activity. Functionally, receptor tyrosine kinase that transduces signals from the extracellular matrix into the cytoplasm by binding to hepatocyte growth factor/HGF ligand. Regulates many physiological processes including proliferation, scattering, morphogenesis and survival. Ligand binding at the cell surface induces autophosphorylation of MET on its intracellular domain that provides docking sites for downstream signaling molecules. Following activation by ligand, interacts with the PI3-kinase subunit PIK3R1, PLCG1, SRC, GRB2, STAT3 or the adapter GAB1. Recruitment of these downstream effectors by MET leads to the activation of several signaling cascades including the RAS-ERK, PI3 kinase-AKT, or PLCgamma-PKC. The RAS-ERK activation is associated with the morphogenetic effects while PI3K/AKT coordinates prosurvival effects. During embryonic development, MET signaling plays a role in gastrulation, development and migration of muscles and neuronal precursors, angiogenesis and kidney formation. In adults, participates in wound healing as well as organ regeneration and tissue remodeling. Also promotes differentiation and proliferation of hematopoietic cells. The chain is Hepatocyte growth factor receptor (MET) from Pongo abelii (Sumatran orangutan).